The following is a 226-amino-acid chain: Uracil-DNA glycosylase (226 aa).

The active-site Proton acceptor is the Asp-64.

The protein belongs to the uracil-DNA glycosylase (UDG) superfamily. UNG family.

It localises to the cytoplasm. It carries out the reaction Hydrolyzes single-stranded DNA or mismatched double-stranded DNA and polynucleotides, releasing free uracil.. In terms of biological role, excises uracil residues from the DNA which can arise as a result of misincorporation of dUMP residues by DNA polymerase or due to deamination of cytosine. The chain is Uracil-DNA glycosylase from Vibrio cholerae serotype O1 (strain ATCC 39541 / Classical Ogawa 395 / O395).